The following is an 881-amino-acid chain: Valine--tRNA ligase (881 aa).

Residues proline 42 to histidine 52 carry the 'HIGH' region motif. A 'KMSKS' region motif is present at residues lysine 554–serine 558. Residue lysine 557 participates in ATP binding.

The protein belongs to the class-I aminoacyl-tRNA synthetase family. ValS type 1 subfamily. In terms of assembly, monomer.

The protein localises to the cytoplasm. It carries out the reaction tRNA(Val) + L-valine + ATP = L-valyl-tRNA(Val) + AMP + diphosphate. Functionally, catalyzes the attachment of valine to tRNA(Val). As ValRS can inadvertently accommodate and process structurally similar amino acids such as threonine, to avoid such errors, it has a 'posttransfer' editing activity that hydrolyzes mischarged Thr-tRNA(Val) in a tRNA-dependent manner. The polypeptide is Valine--tRNA ligase (Wigglesworthia glossinidia brevipalpis).